A 96-amino-acid polypeptide reads, in one-letter code: Tenecin-3 (96 aa).

Positions 1 to 18 (MKTFVICLILVVAVSAAP) are cleaved as a signal peptide. Residues 19 to 96 (DHHDGHLGGH…HQGGYKTHGH (78 aa)) are disordered. A run of 12 repeats spans residues 23-26 (GHLG), 31-34 (GHQG), 35-38 (GQQG), 39-42 (GHLG), 43-46 (GQQG), 47-50 (GHLG), 51-54 (GHQG), 59-62 (GHLG), 63-66 (GHQG), 67-70 (GIGG), 77-80 (GQHG), and 86-89 (GHQG). A 12 X 4 AA repeats of G-X-X-G region spans residues 23-89 (GHLGGHQTGH…GPGTGAGHQG (67 aa)). Residues 26–89 (GGHQTGHQGG…GPGTGAGHQG (64 aa)) show a composition bias toward gly residues.

It to H.diomphalia holotricin 3.

The protein resides in the secreted. Its function is as follows. Antifungal heat stable protein produced in response to injury. It is active against C.albicans. No antibacterial activity against Gram-positive and Gram-negative bacteria. The sequence is that of Tenecin-3 from Tenebrio molitor (Yellow mealworm beetle).